The chain runs to 59 residues: Large ribosomal subunit protein bL32 (59 aa).

2 disordered regions span residues Met-1–Thr-23 and Glu-35–Asp-59. Over residues Arg-49–Asp-59 the composition is skewed to basic residues.

The protein belongs to the bacterial ribosomal protein bL32 family.

This Burkholderia ambifaria (strain MC40-6) protein is Large ribosomal subunit protein bL32.